We begin with the raw amino-acid sequence, 124 residues long: MNWLLVIAGAMVGAPLRYVTDRMVQLRHDAVFPWGTFAINVTGCLVLGLLTGAASAGVASPHLELLLGTGLCGALTTYSTFSYETLRLTETGAGFYAAANAIASVAAGLGAAFAGVWFAQALWA.

The next 4 helical transmembrane spans lie at 1 to 21 (MNWL…YVTD), 30 to 50 (AVFP…LGLL), 56 to 76 (AGVA…GALT), and 102 to 122 (IASV…AQAL). Na(+) is bound by residues Gly-73 and Thr-76.

It belongs to the fluoride channel Fluc/FEX (TC 1.A.43) family.

It localises to the cell membrane. The enzyme catalyses fluoride(in) = fluoride(out). With respect to regulation, na(+) is not transported, but it plays an essential structural role and its presence is essential for fluoride channel function. In terms of biological role, fluoride-specific ion channel. Important for reducing fluoride concentration in the cell, thus reducing its toxicity. The chain is Fluoride-specific ion channel FluC 1 from Streptomyces avermitilis (strain ATCC 31267 / DSM 46492 / JCM 5070 / NBRC 14893 / NCIMB 12804 / NRRL 8165 / MA-4680).